We begin with the raw amino-acid sequence, 223 residues long: Small ribosomal subunit protein uS3 (223 aa).

One can recognise a KH type-2 domain in the interval 38 to 106; the sequence is LKAELKEKLK…EVYIDIQEVH (69 aa).

It belongs to the universal ribosomal protein uS3 family. In terms of assembly, part of the 30S ribosomal subunit. Forms a tight complex with proteins S10 and S14.

Its function is as follows. Binds the lower part of the 30S subunit head. Binds mRNA in the 70S ribosome, positioning it for translation. In Koribacter versatilis (strain Ellin345), this protein is Small ribosomal subunit protein uS3.